A 143-amino-acid chain; its full sequence is Putative pre-16S rRNA nuclease (143 aa).

Belongs to the YqgF nuclease family.

The protein resides in the cytoplasm. Could be a nuclease involved in processing of the 5'-end of pre-16S rRNA. The protein is Putative pre-16S rRNA nuclease of Crocosphaera subtropica (strain ATCC 51142 / BH68) (Cyanothece sp. (strain ATCC 51142)).